An 804-amino-acid chain; its full sequence is Protein-lysine N-methyltransferase SMYD4 (804 aa).

112-114 (RSA) serves as a coordination point for S-adenosyl-L-methionine. The 342-residue stretch at 233–574 (SSIGLCVDPL…KGQEILHCYG (342 aa)) folds into the SET domain. Zn(2+) contacts are provided by Cys296, Cys299, Cys309, Cys312, Cys318, Cys322, His331, and Cys335. The MYND-type zinc-finger motif lies at 296–335 (CHRCLKHTLATVPCDGCSYAKYCSQECLQQAWELYHRTEC). Residues Asn427, 539 to 540 (NH), Tyr573, and Phe595 contribute to the S-adenosyl-L-methionine site.

It belongs to the class V-like SAM-binding methyltransferase superfamily. As to quaternary structure, interacts (via MYND-type zinc finger) with HDAC1.

Its subcellular location is the nucleus. The protein localises to the cytoplasm. The enzyme catalyses L-lysyl-[protein] + S-adenosyl-L-methionine = N(6)-methyl-L-lysyl-[protein] + S-adenosyl-L-homocysteine + H(+). Protein-lysine N-methyltransferase. Monomethylates PRMT5, modulating its transcriptional activity. May also act as a histone methyltransferase. Plays a critical role in cardiac development. Acts as a key epigenetic regulator of gene expression during cardiac development via its dual activities as a methyltransferase and negative regulator of HDAC1. This Homo sapiens (Human) protein is Protein-lysine N-methyltransferase SMYD4.